The sequence spans 238 residues: Orotidine 5'-phosphate decarboxylase (238 aa).

Substrate contacts are provided by residues D18, K40, 67 to 76 (DMKLLDIDNT), T122, R183, Q192, and R213. K69 acts as the Proton donor in catalysis.

It belongs to the OMP decarboxylase family. Type 1 subfamily. In terms of assembly, homodimer.

The enzyme catalyses orotidine 5'-phosphate + H(+) = UMP + CO2. The protein operates within pyrimidine metabolism; UMP biosynthesis via de novo pathway; UMP from orotate: step 2/2. Catalyzes the decarboxylation of orotidine 5'-monophosphate (OMP) to uridine 5'-monophosphate (UMP). The polypeptide is Orotidine 5'-phosphate decarboxylase (Brucella abortus (strain S19)).